Here is a 697-residue protein sequence, read N- to C-terminus: Trishanku (697 aa).

The disordered stretch occupies residues 1–94 (MEIEPVVRIS…NNNSNSNGTD (94 aa)). The span at 12–47 (NGNNNQNNNNNNNNNTNNNSNNNNNNNNSSNINSTN) shows a compositional bias: low complexity. A compositionally biased stretch (polar residues) spans 58 to 72 (KMISNINNQKSPNPL). Residues 73–91 (NSSVDDNNNTNNNNNSNSN) are compositionally biased toward low complexity. The 68-residue stretch at 122–189 (SDVIFKVGDR…ICIGILDLDY (68 aa)) folds into the BTB domain. The segment at 311-455 (IQQQQQQQQQ…DSANDDYEYS (145 aa)) is disordered. The segment covering 312 to 331 (QQQQQQQQQQLQSANGASGK) has biased composition (low complexity). Residues 332-344 (SHGKRSSSSHLKK) are compositionally biased toward basic residues. Residues 353-363 (GSCSSRCSSRR) show a composition bias toward low complexity. Over residues 416–453 (DDFENDSEDGDDDDEDDDEDDDFTDDDDKDDSANDDYE) the composition is skewed to acidic residues.

Expressed strongly in presumptive spore (prespore or psp) cells during the late G2 phase of cell cycle. Present at a low level in vegetative cells.

Its function is as follows. Required for normal morphogenesis and cell-type stability. The chain is Trishanku (triA) from Dictyostelium discoideum (Social amoeba).